The sequence spans 386 residues: HORMA domain-containing protein 1 (386 aa).

An HORMA domain is found at 24 to 224 (TQSLILVKRL…TPFHVLKVKV (201 aa)). Disordered stretches follow at residues 237 to 274 (SIFKKQASKQPQTDEEKPDLSINDDLAQDNNGDRKRDD) and 289 to 386 (EDGN…TPLN). A compositionally biased stretch (polar residues) spans 289–313 (EDGNLQSDDSQNSALADSQEKTSQA). Basic and acidic residues predominate over residues 329 to 343 (QKPDLELKNQKESAR).

Its subcellular location is the nucleus. The protein resides in the chromosome. Functionally, plays a key role in meiotic progression by ensuring that sufficient numbers of processed DNA double-strand breaks (DSBs) are available for successful homology search, promoting synaptonemal-complex formation independently and playing key role in the male mid-pachytene checkpoint and the female meiotic prophase checkpoint. In Xenopus laevis (African clawed frog), this protein is HORMA domain-containing protein 1 (hormad1).